The sequence spans 834 residues: Taste receptor type 1 member 2 (834 aa).

The N-terminal stretch at 1–19 (MEPRVRTVCFLFFLLRVLA) is a signal peptide. Over 20 to 561 (EPAKNSDFYL…SFLEWHEAAT (542 aa)) the chain is Extracellular. N-linked (GlcNAc...) asparagine glycans are attached at residues Asn84, Asn292, Asn312, Asn363, Asn423, Asn482, and Asn522. Residues 562 to 582 (IAVALLAALGFLSTLAILVIF) form a helical membrane-spanning segment. The Cytoplasmic segment spans residues 583–597 (WRHFETPMVRSAGGP). A helical transmembrane segment spans residues 598–618 (MCFLMLTLLLVAYMVVPVYVG). Over 619-630 (LPKVSTCLCRQA) the chain is Extracellular. The chain crosses the membrane as a helical span at residues 631-651 (LFPVCFTICISCIAVRSFQIV). The Cytoplasmic portion of the chain corresponds to 652-676 (CVFKMASRFPRAYSYWVRYQGSYVS). Residues 677–697 (VAFITALKMVTVVISLLATGL) form a helical membrane-spanning segment. Topologically, residues 698 to 722 (NPTTRTDTDDPKIMIISCNPNYRNS) are extracellular. Residues 723 to 743 (LLFNTSLDLLLSVAGFSFAYM) form a helical membrane-spanning segment. Topologically, residues 744 to 755 (GKELPTNYNEAK) are cytoplasmic. Residues 756–776 (FITFSMTFYFTSSVSLCTFMS) form a helical membrane-spanning segment. Residues 777-779 (VYD) lie on the Extracellular side of the membrane. Residues 780 to 800 (GVLVTIVDLLVTVFNLLAISL) form a helical membrane-spanning segment. Over 801–834 (GYFGPKCYMILFYPERNTPAYFNSMIQGYTMRRD) the chain is Cytoplasmic.

It belongs to the G-protein coupled receptor 3 family. TAS1R subfamily. As to quaternary structure, forms heterodimers with TAS1R3.

It localises to the cell membrane. Putative taste receptor. TAS1R2/TAS1R3 recognizes diverse natural and synthetic sweeteners. The protein is Taste receptor type 1 member 2 (TAS1R2) of Saimiri sciureus (Common squirrel monkey).